A 141-amino-acid chain; its full sequence is Nucleoside triphosphatase NudI (141 aa).

Residues 1–141 (MRQRTIVCPL…RKTLRLKGLL (141 aa)) enclose the Nudix hydrolase domain. The short motif at 38–59 (GGVEPGERIEEALRREIREELG) is the Nudix box element.

This sequence belongs to the Nudix hydrolase family. NudI subfamily. Monomer. It depends on Mg(2+) as a cofactor.

The catalysed reaction is a ribonucleoside 5'-triphosphate + H2O = a ribonucleoside 5'-phosphate + diphosphate + H(+). It carries out the reaction a 2'-deoxyribonucleoside 5'-triphosphate + H2O = a 2'-deoxyribonucleoside 5'-phosphate + diphosphate + H(+). The enzyme catalyses dUTP + H2O = dUMP + diphosphate + H(+). It catalyses the reaction dTTP + H2O = dTMP + diphosphate + H(+). The catalysed reaction is dCTP + H2O = dCMP + diphosphate + H(+). Functionally, catalyzes the hydrolysis of nucleoside triphosphates, with a preference for pyrimidine deoxynucleoside triphosphates (dUTP, dTTP and dCTP). The polypeptide is Nucleoside triphosphatase NudI (Escherichia coli O17:K52:H18 (strain UMN026 / ExPEC)).